Here is a 420-residue protein sequence, read N- to C-terminus: Inheritance of peroxisomes protein 1 (420 aa).

Positions 1–10 are enriched in basic and acidic residues; the sequence is MVLSRGETKK. 2 disordered regions span residues 1–75 and 273–309; these read MVLS…QRKR and SLSD…NYDD. The segment covering 30 to 39 has biased composition (low complexity); it reads LKQSLKLSNN. Residues 45–56 are compositionally biased toward polar residues; sequence DSTQHSNDTNKS. Residue Ser273 is modified to Phosphoserine. The span at 295–309 shows a compositional bias: acidic residues; sequence NNDDDNDDDDDNYDD.

The protein belongs to the INP1 family. In terms of assembly, interacts with PEX25, PEX30 and VPS1.

It is found in the peroxisome membrane. Its function is as follows. Required for peroxisome inheritance. The protein is Inheritance of peroxisomes protein 1 (INP1) of Saccharomyces cerevisiae (strain ATCC 204508 / S288c) (Baker's yeast).